A 155-amino-acid polypeptide reads, in one-letter code: Cytochrome c-type biogenesis protein CcmE (155 aa).

Topologically, residues 1 to 8 (MNPVRKRR) are cytoplasmic. The helical; Signal-anchor for type II membrane protein transmembrane segment at 9–29 (LFIVLAILAGVGAAVALALSA) threads the bilayer. At 30 to 155 (LQQNINLFYT…YENGKPGGAQ (126 aa)) the chain is on the periplasmic side. Residues H124 and Y128 each coordinate heme.

Belongs to the CcmE/CycJ family.

It localises to the cell inner membrane. Heme chaperone required for the biogenesis of c-type cytochromes. Transiently binds heme delivered by CcmC and transfers the heme to apo-cytochromes in a process facilitated by CcmF and CcmH. The sequence is that of Cytochrome c-type biogenesis protein CcmE from Azotobacter vinelandii (strain DJ / ATCC BAA-1303).